We begin with the raw amino-acid sequence, 100 residues long: Small ribosomal subunit protein bS21 (100 aa).

The span at 37-52 shows a compositional bias: basic and acidic residues; sequence EKPSEKKAREKAEAVR. The tract at residues 37–100 is disordered; it reads EKPSEKKARE…GAGAGPRGPR (64 aa). A compositionally biased stretch (basic residues) spans 53-62; sequence RARKLARKKL. Positions 84–100 are enriched in gly residues; it reads GAAGAGAGAGAGPRGPR.

Belongs to the bacterial ribosomal protein bS21 family.

The chain is Small ribosomal subunit protein bS21 from Rhodopseudomonas palustris (strain BisB5).